Consider the following 147-residue polypeptide: Mediator of RNA polymerase II transcription subunit 10 (147 aa).

This sequence belongs to the Mediator complex subunit 10 family. As to quaternary structure, component of the Mediator complex.

The protein resides in the nucleus. Its function is as follows. Component of the Mediator complex, a coactivator involved in the regulated transcription of nearly all RNA polymerase II-dependent genes. Mediator functions as a bridge to convey information from gene-specific regulatory proteins to the basal RNA polymerase II transcription machinery. Mediator is recruited to promoters by direct interactions with regulatory proteins and serves as a scaffold for the assembly of a functional preinitiation complex with RNA polymerase II and the general transcription factors. The chain is Mediator of RNA polymerase II transcription subunit 10 (NUT2) from Debaryomyces hansenii (strain ATCC 36239 / CBS 767 / BCRC 21394 / JCM 1990 / NBRC 0083 / IGC 2968) (Yeast).